Consider the following 425-residue polypeptide: 2-methylserine hydroxymethyltransferase (425 aa).

Residues Leu-126 and 130–132 (GHL) each bind (6S)-5,6,7,8-tetrahydrofolate. Position 235 is an N6-(pyridoxal phosphate)lysine (Lys-235). Glu-251 provides a ligand contact to (6S)-5,6,7,8-tetrahydrofolate.

Belongs to the SHMT family. In terms of assembly, homodimer. Pyridoxal 5'-phosphate is required as a cofactor.

It localises to the cytoplasm. It carries out the reaction (6R)-5,10-methylene-5,6,7,8-tetrahydrofolate + D-alanine + H2O = 2-methylserine + (6S)-5,6,7,8-tetrahydrofolate. It participates in one-carbon metabolism; tetrahydrofolate interconversion. Catalyzes the reversible interconversion of alpha-methyl-L-serine to D-alanine with tetrahydrofolate (THF) serving as the one-carbon carrier. Cannot use alpha-methyl-D-serine, L-serine, D-serine or L-alanine. The sequence is that of 2-methylserine hydroxymethyltransferase from Ensifer sp.